Reading from the N-terminus, the 259-residue chain is 1,2-dihydroxy-1,2-dihydronaphthalene dehydrogenase (259 aa).

8 to 32 (SITGAGSGIGLELVRSFKSAGYYVS) is an NAD(+) binding site. Serine 140 serves as a coordination point for substrate. The active-site Proton acceptor is tyrosine 153.

This sequence belongs to the short-chain dehydrogenases/reductases (SDR) family.

It catalyses the reaction (1R,2S)-1,2-dihydronaphthalene-1,2-diol + NAD(+) = naphthalene-1,2-diol + NADH + H(+). The catalysed reaction is cis-1,2-dihydroxy-1,2-dihydrodibenzothiophene + NAD(+) = 1,2-dihydroxydibenzothiophene + NADH + H(+). The protein operates within aromatic compound metabolism; naphthalene degradation. Catalyzes the oxidation of naphthalene dihydrodiol into 1,2-dihydroxynaphthalene. This chain is 1,2-dihydroxy-1,2-dihydronaphthalene dehydrogenase (nahB), found in Pseudomonas putida (Arthrobacter siderocapsulatus).